Reading from the N-terminus, the 232-residue chain is GFP-like fluorescent chromoprotein dsFP483 (232 aa).

Residues 66–68 constitute a cross-link (2-iminomethyl-5-imidazolinone (Gln-Gly)); sequence QYG. The residue at position 67 (Y67) is a 2,3-didehydrotyrosine.

This sequence belongs to the GFP family. Contains a chromophore consisting of modified amino acid residues. The chromophore is formed by autocatalytic backbone condensation between Xaa-N and Gly-(N+2), oxidation of Tyr-(N+1) to didehydrotyrosine, and formation of a double bond to the alpha-amino nitrogen of residue Xaa-N. Maturation of the chromophore requires nothing other than molecular oxygen. The precise stereochemistry of the tyrosine has not been determined. In terms of tissue distribution, oral disk.

Pigment protein that is green in color. The sequence is that of GFP-like fluorescent chromoprotein dsFP483 from Discosoma striata (Striped mushroom).